Reading from the N-terminus, the 118-residue chain is Large ribosomal subunit protein bL19 (118 aa).

The protein belongs to the bacterial ribosomal protein bL19 family.

In terms of biological role, this protein is located at the 30S-50S ribosomal subunit interface and may play a role in the structure and function of the aminoacyl-tRNA binding site. This Helicobacter pylori (strain J99 / ATCC 700824) (Campylobacter pylori J99) protein is Large ribosomal subunit protein bL19 (rplS).